We begin with the raw amino-acid sequence, 495 residues long: Bifunctional protein GlmU (495 aa).

The segment at 1 to 241 is pyrophosphorylase; it reads MTFPGDTAVL…SALVAGVNNR (241 aa). Residues 12-15, Lys26, Gln83, 88-89, 112-114, Gly151, Glu166, Asn181, and Asn239 contribute to the UDP-N-acetyl-alpha-D-glucosamine site; these read LAAG, GT, and SGD. A Mg(2+)-binding site is contributed by Asp114. Asn239 serves as a coordination point for Mg(2+). Positions 242 to 262 are linker; sequence VQLAQLASELNRRVVAAHQLA. The interval 263–495 is N-acetyltransferase; sequence GVTVVDPATT…TQPPDADQTP (233 aa). The UDP-N-acetyl-alpha-D-glucosamine site is built by Arg344 and Lys362. Catalysis depends on His374, which acts as the Proton acceptor. UDP-N-acetyl-alpha-D-glucosamine is bound by residues Tyr377 and Asn388. Acetyl-CoA contacts are provided by residues Ala391, 397–398, Ser416, and Ala434; that span reads NY. Residues 457–495 are disordered; that stretch reads IENWVQRKRPGSPAAQASKRASEMACQQPTQPPDADQTP. Over residues 483-495 the composition is skewed to low complexity; that stretch reads QQPTQPPDADQTP.

The protein in the N-terminal section; belongs to the N-acetylglucosamine-1-phosphate uridyltransferase family. In the C-terminal section; belongs to the transferase hexapeptide repeat family. In terms of assembly, homotrimer. It depends on Mg(2+) as a cofactor.

It localises to the cytoplasm. It carries out the reaction alpha-D-glucosamine 1-phosphate + acetyl-CoA = N-acetyl-alpha-D-glucosamine 1-phosphate + CoA + H(+). The enzyme catalyses N-acetyl-alpha-D-glucosamine 1-phosphate + UTP + H(+) = UDP-N-acetyl-alpha-D-glucosamine + diphosphate. It participates in nucleotide-sugar biosynthesis; UDP-N-acetyl-alpha-D-glucosamine biosynthesis; N-acetyl-alpha-D-glucosamine 1-phosphate from alpha-D-glucosamine 6-phosphate (route II): step 2/2. Its pathway is nucleotide-sugar biosynthesis; UDP-N-acetyl-alpha-D-glucosamine biosynthesis; UDP-N-acetyl-alpha-D-glucosamine from N-acetyl-alpha-D-glucosamine 1-phosphate: step 1/1. The protein operates within bacterial outer membrane biogenesis; LPS lipid A biosynthesis. Its function is as follows. Catalyzes the last two sequential reactions in the de novo biosynthetic pathway for UDP-N-acetylglucosamine (UDP-GlcNAc). The C-terminal domain catalyzes the transfer of acetyl group from acetyl coenzyme A to glucosamine-1-phosphate (GlcN-1-P) to produce N-acetylglucosamine-1-phosphate (GlcNAc-1-P), which is converted into UDP-GlcNAc by the transfer of uridine 5-monophosphate (from uridine 5-triphosphate), a reaction catalyzed by the N-terminal domain. This Mycobacterium bovis (strain ATCC BAA-935 / AF2122/97) protein is Bifunctional protein GlmU.